The primary structure comprises 240 residues: Glutathione S-transferase theta-1 (240 aa).

Residues 2–82 enclose the GST N-terminal domain; sequence GLELYLDLLS…YLARKYKVPD (81 aa). Residues His40, 53-54, and 66-67 each bind glutathione; these read KV and ES. Residues 88-226 enclose the GST C-terminal domain; it reads DLQACARVDE…AKDSQPADPT (139 aa).

Belongs to the GST superfamily. Theta family. As to quaternary structure, homodimer.

The protein resides in the cytoplasm. It carries out the reaction RX + glutathione = an S-substituted glutathione + a halide anion + H(+). Functionally, conjugation of reduced glutathione to a wide number of exogenous and endogenous hydrophobic electrophiles. Also binds steroids, bilirubin, carcinogens and numerous organic anions. Has dichloromethane dehalogenase activity. The sequence is that of Glutathione S-transferase theta-1 (GSTT1) from Bos taurus (Bovine).